The sequence spans 257 residues: Aquaporin TIP4-2 (257 aa).

The next 2 membrane-spanning stretches (helical) occupy residues 32–52 (LVLT…AGAG) and 63–83 (TLAA…TAGF). Positions 91-93 (NPA) match the NPA 1 motif. 3 helical membrane-spanning segments follow: residues 107–127 (LRAL…CILL), 150–170 (GLVM…AMIL), and 178–198 (TIGP…GGNF). The NPA 2 signature appears at 204 to 206 (NPA). A helical membrane pass occupies residues 225–245 (WIGPLLGGSLAGFVYESLFMV).

Belongs to the MIP/aquaporin (TC 1.A.8) family. TIP (TC 1.A.8.10) subfamily.

Its subcellular location is the vacuole membrane. Functionally, aquaporins facilitate the transport of water and small neutral solutes across cell membranes. The sequence is that of Aquaporin TIP4-2 (TIP4-2) from Zea mays (Maize).